Here is a 679-residue protein sequence, read N- to C-terminus: MPAYELSAPYTPKGDQPTAISKLVEGVNGGERYQTLLGATGTGKTFTMANVIAQTGRPALVLAHNKTLAAQLCNELREFFPHNAVEYFISYYDYYQPEAYVPVSDTYIAKTASINEEIDMLRHSATRSLFERRDVIVVASISCIYGLGIPSEYLKAAVPFKVGETLNLRGSLRDLVNNQYSRNDTEAGRGRFRVKGDVLEIGPAYDDRLVRVELFGDEVEAIRYVDPTTGEILQSLDAISIYPAKHFVTPKERLNDAVKAIRSELKERLEFLNGEGKLLEAQRLEQRATYDLEMLQQIGYCNGVENYARHLAGREPGSAPECLIDYFPDDWLLIVDESHVTCSQLLAMYNGDQARKKVLIDHGFRLPSAADNRPLKSEEFWSKAKQTVFVSATPGNWEMEVSEGQVAEQVIRPTGVLDPLVEVRPTTGQVDDLLGEIRDRASKKQRVLVTTLTKRMAEDLTDYLAENKVRVRYLHSEIHSIERIEIIQDLRLGEYDVLVGVNLLREGLDLPEVSLVAILDADKEGFLRAQRSLIQTIGRAARHVEGKALLYAETMTDSMAKAIEETERRRKIQHTYNEKHGITPTAAGKKASNSILSFLELSRKLKADGPDADLVKVAGKAVQALEEDVDGLALDALPELIDQLELKMKESAKKLDFEEAANLRDRIKKLRQKLVGSSR.

A Helicase ATP-binding domain is found at 25–176 (EGVNGGERYQ…NLRGSLRDLV (152 aa)). 38 to 45 (GATGTGKT) lines the ATP pocket. The Beta-hairpin signature appears at 91 to 114 (YYDYYQPEAYVPVSDTYIAKTASI). One can recognise a Helicase C-terminal domain in the interval 429 to 591 (QVDDLLGEIR…ITPTAAGKKA (163 aa)). Residues 638–673 (PELIDQLELKMKESAKKLDFEEAANLRDRIKKLRQK) enclose the UVR domain.

Belongs to the UvrB family. As to quaternary structure, forms a heterotetramer with UvrA during the search for lesions. Interacts with UvrC in an incision complex.

The protein localises to the cytoplasm. The UvrABC repair system catalyzes the recognition and processing of DNA lesions. A damage recognition complex composed of 2 UvrA and 2 UvrB subunits scans DNA for abnormalities. Upon binding of the UvrA(2)B(2) complex to a putative damaged site, the DNA wraps around one UvrB monomer. DNA wrap is dependent on ATP binding by UvrB and probably causes local melting of the DNA helix, facilitating insertion of UvrB beta-hairpin between the DNA strands. Then UvrB probes one DNA strand for the presence of a lesion. If a lesion is found the UvrA subunits dissociate and the UvrB-DNA preincision complex is formed. This complex is subsequently bound by UvrC and the second UvrB is released. If no lesion is found, the DNA wraps around the other UvrB subunit that will check the other stand for damage. The chain is UvrABC system protein B from Synechococcus sp. (strain CC9311).